A 578-amino-acid polypeptide reads, in one-letter code: 2-succinyl-5-enolpyruvyl-6-hydroxy-3-cyclohexene-1-carboxylate synthase (578 aa).

It belongs to the TPP enzyme family. MenD subfamily. Homodimer. Requires Mg(2+) as cofactor. Mn(2+) serves as cofactor. It depends on thiamine diphosphate as a cofactor.

It carries out the reaction isochorismate + 2-oxoglutarate + H(+) = 5-enolpyruvoyl-6-hydroxy-2-succinyl-cyclohex-3-ene-1-carboxylate + CO2. It participates in quinol/quinone metabolism; 1,4-dihydroxy-2-naphthoate biosynthesis; 1,4-dihydroxy-2-naphthoate from chorismate: step 2/7. The protein operates within quinol/quinone metabolism; menaquinone biosynthesis. Its function is as follows. Catalyzes the thiamine diphosphate-dependent decarboxylation of 2-oxoglutarate and the subsequent addition of the resulting succinic semialdehyde-thiamine pyrophosphate anion to isochorismate to yield 2-succinyl-5-enolpyruvyl-6-hydroxy-3-cyclohexene-1-carboxylate (SEPHCHC). This Bacillus velezensis (strain DSM 23117 / BGSC 10A6 / LMG 26770 / FZB42) (Bacillus amyloliquefaciens subsp. plantarum) protein is 2-succinyl-5-enolpyruvyl-6-hydroxy-3-cyclohexene-1-carboxylate synthase.